A 186-amino-acid chain; its full sequence is MKERISQVIVVEGRDDTVNLKRYFDVETYETRGSAINDQDIERIQRLHQRHGVIVFTDPDFNGERIRRMIMTAIPTVQHAFLKRDEAVPKSKTKGRSLGIEHASYEDLKTALAQVTEQFEHESQFDISRSDLIRLGFLAGADSRKRREYLGETLRIGYSNGKQLLKRLELFGVTLAEVEEAMKSYE.

Residues 6 to 89 (SQVIVVEGRD…AFLKRDEAVP (84 aa)) form the Toprim domain. 3 residues coordinate Mg(2+): Glu12, Asp58, and Asp60.

This sequence belongs to the ribonuclease M5 family. It depends on Mg(2+) as a cofactor.

The protein localises to the cytoplasm. It catalyses the reaction Endonucleolytic cleavage of RNA, removing 21 and 42 nucleotides, respectively, from the 5'- and 3'-termini of a 5S-rRNA precursor.. Its function is as follows. Required for correct processing of both the 5' and 3' ends of 5S rRNA precursor. Cleaves both sides of a double-stranded region yielding mature 5S rRNA in one step. In Streptococcus pneumoniae (strain ATCC BAA-255 / R6), this protein is Ribonuclease M5.